The chain runs to 204 residues: Urease accessory protein UreG (204 aa).

12–19 (GPVGSGKT) serves as a coordination point for GTP.

It belongs to the SIMIBI class G3E GTPase family. UreG subfamily. Homodimer. UreD, UreF and UreG form a complex that acts as a GTP-hydrolysis-dependent molecular chaperone, activating the urease apoprotein by helping to assemble the nickel containing metallocenter of UreC. The UreE protein probably delivers the nickel.

It is found in the cytoplasm. Functionally, facilitates the functional incorporation of the urease nickel metallocenter. This process requires GTP hydrolysis, probably effectuated by UreG. This chain is Urease accessory protein UreG, found in Pseudomonas fluorescens (strain Pf0-1).